Consider the following 198-residue polypeptide: Heme oxygenase PigA (198 aa).

Histidine 26 provides a ligand contact to heme b.

Belongs to the heme oxygenase family.

The enzyme catalyses heme b + 3 AH2 + 3 O2 + 2 H(+) = biliverdin IXbeta + CO + Fe(2+) + 3 A + 3 H2O. The catalysed reaction is heme b + 3 AH2 + 3 O2 + 3 H(+) = biliverdin IXdelta + CO + Fe(2+) + 3 A + 3 H2O. In terms of biological role, involved in heme degradation. Catalyzes the degradation of heme to biliverdin, with the release of iron. Forms biliverdin delta (70%) and beta (30%). Under anaerobic conditions ferredoxin--NADP(+) reductase (fpr) can provide the necessary electrons; Bfd is not required. This is Heme oxygenase PigA from Pseudomonas aeruginosa (strain ATCC 15692 / DSM 22644 / CIP 104116 / JCM 14847 / LMG 12228 / 1C / PRS 101 / PAO1).